An 80-amino-acid chain; its full sequence is Exodeoxyribonuclease 7 small subunit (80 aa).

It belongs to the XseB family. As to quaternary structure, heterooligomer composed of large and small subunits.

The protein localises to the cytoplasm. The enzyme catalyses Exonucleolytic cleavage in either 5'- to 3'- or 3'- to 5'-direction to yield nucleoside 5'-phosphates.. In terms of biological role, bidirectionally degrades single-stranded DNA into large acid-insoluble oligonucleotides, which are then degraded further into small acid-soluble oligonucleotides. The sequence is that of Exodeoxyribonuclease 7 small subunit from Vibrio vulnificus (strain CMCP6).